A 158-amino-acid polypeptide reads, in one-letter code: NAD(P)H-quinone oxidoreductase subunit J, chloroplastic (158 aa).

This sequence belongs to the complex I 30 kDa subunit family. NDH is composed of at least 16 different subunits, 5 of which are encoded in the nucleus.

Its subcellular location is the plastid. It localises to the chloroplast thylakoid membrane. It catalyses the reaction a plastoquinone + NADH + (n+1) H(+)(in) = a plastoquinol + NAD(+) + n H(+)(out). It carries out the reaction a plastoquinone + NADPH + (n+1) H(+)(in) = a plastoquinol + NADP(+) + n H(+)(out). NDH shuttles electrons from NAD(P)H:plastoquinone, via FMN and iron-sulfur (Fe-S) centers, to quinones in the photosynthetic chain and possibly in a chloroplast respiratory chain. The immediate electron acceptor for the enzyme in this species is believed to be plastoquinone. Couples the redox reaction to proton translocation, and thus conserves the redox energy in a proton gradient. The polypeptide is NAD(P)H-quinone oxidoreductase subunit J, chloroplastic (Panax ginseng (Korean ginseng)).